Consider the following 352-residue polypeptide: C-C chemokine receptor type 5 (352 aa).

The Extracellular portion of the chain corresponds to 1–30 (MDYQVSSPTYDIDYYTSEPCQKINVKQIAA). Position 3 is a sulfotyrosine (Tyr3). 2 O-linked (GalNAc...) serine glycosylation sites follow: Ser6 and Ser7. Sulfotyrosine is present on residues Tyr10, Tyr14, and Tyr15. 2 disulfides stabilise this stretch: Cys20-Cys269 and Cys101-Cys178. A helical membrane pass occupies residues 31–58 (RLLPPLYSLVFIFGFVGNILVVLILINC). Residues 59–68 (KRLKSMTDIY) lie on the Cytoplasmic side of the membrane. Residues 69–89 (LLNLAISDLLFLLTVPFWAHY) form a helical membrane-spanning segment. Residues 90–102 (AAAQWDFGNTMCQ) lie on the Extracellular side of the membrane. A helical membrane pass occupies residues 103–124 (LLTGLYFIGFFSGIFFIILLTI). Residues 125–141 (DRYLAIVHAVFALKART) lie on the Cytoplasmic side of the membrane. A helical membrane pass occupies residues 142–166 (VTFGVVTSVITWVVAVFASLPRIIF). Topologically, residues 167-198 (TRSQREGLHYTCSSHFPYSQYQFWKNFQTLKI) are extracellular. Residues 199-218 (VILGLVLPLLVMVICYSGIL) traverse the membrane as a helical segment. At 219 to 235 (KTLLRCRNEKKRHRAVR) the chain is on the cytoplasmic side. Residues 236–260 (LIFTIMIVYFLFWAPYNIVLLLNTF) traverse the membrane as a helical segment. Topologically, residues 261 to 277 (QEFFGLNNCSSSNRLDQ) are extracellular. A helical transmembrane segment spans residues 278–301 (AMQVTETLGMTHCCINPIIYAFVG). The Cytoplasmic segment spans residues 302 to 352 (EKFRNYLLVFFQKHIAKRFCKCCSIFQQEAPERASSVYTRSTGEQETSVGL). S-palmitoyl cysteine attachment occurs at residues Cys321, Cys323, and Cys324. 4 positions are modified to phosphoserine; by BARK1: Ser336, Ser337, Ser342, and Ser349.

Belongs to the G-protein coupled receptor 1 family. As to quaternary structure, interacts with PRAF2. Efficient ligand binding to CCL3/MIP-1alpha and CCL4/MIP-1beta requires sulfation, O-glycosylation and sialic acid modifications. Glycosylation on Ser-6 is required for efficient binding of CCL4. Interacts with GRK2. Interacts with ARRB1 and ARRB2. Interacts with CNIH4. Interacts with S100A4; this interaction stimulates T-lymphocyte chemotaxis. In terms of processing, sulfated on at least 2 of the N-terminal tyrosines. Sulfation is required for efficient binding of the chemokines, CCL3 and CCL4. Palmitoylation in the C-terminal is important for cell surface expression. Post-translationally, phosphorylation on serine residues in the C-terminal is stimulated by binding CC chemokines especially by APO-RANTES. In terms of processing, O-glycosylated, but not N-glycosylated. Ser-6 appears to be the major site even if Ser-7 may be also O-glycosylated. Also sialylated glycans present which contribute to chemokine binding. Thr-16 and Ser-17 may also be glycosylated and, if so, with small moieties such as a T-antigen.

The protein resides in the cell membrane. In terms of biological role, receptor for a number of inflammatory CC-chemokines including CCL3/MIP-1-alpha, CCL4/MIP-1-beta and RANTES and subsequently transduces a signal by increasing the intracellular calcium ion level. May play a role in the control of granulocytic lineage proliferation or differentiation. Participates in T-lymphocyte migration to the infection site by acting as a chemotactic receptor. The chain is C-C chemokine receptor type 5 (CCR5) from Chlorocebus tantalus (Tantalus monkey).